The primary structure comprises 360 residues: DNA replication and repair protein RecF (360 aa).

30–37 (GQNGSGKT) contributes to the ATP binding site.

It belongs to the RecF family.

It is found in the cytoplasm. In terms of biological role, the RecF protein is involved in DNA metabolism; it is required for DNA replication and normal SOS inducibility. RecF binds preferentially to single-stranded, linear DNA. It also seems to bind ATP. This Shewanella sp. (strain MR-4) protein is DNA replication and repair protein RecF.